Reading from the N-terminus, the 129-residue chain is Phosphoribosyl-AMP cyclohydrolase (129 aa).

Aspartate 76 contacts Mg(2+). Cysteine 77 is a Zn(2+) binding site. 2 residues coordinate Mg(2+): aspartate 78 and aspartate 80. Residues cysteine 97 and cysteine 104 each contribute to the Zn(2+) site.

Belongs to the PRA-CH family. As to quaternary structure, homodimer. Requires Mg(2+) as cofactor. The cofactor is Zn(2+).

It localises to the cytoplasm. The catalysed reaction is 1-(5-phospho-beta-D-ribosyl)-5'-AMP + H2O = 1-(5-phospho-beta-D-ribosyl)-5-[(5-phospho-beta-D-ribosylamino)methylideneamino]imidazole-4-carboxamide. Its pathway is amino-acid biosynthesis; L-histidine biosynthesis; L-histidine from 5-phospho-alpha-D-ribose 1-diphosphate: step 3/9. Functionally, catalyzes the hydrolysis of the adenine ring of phosphoribosyl-AMP. This is Phosphoribosyl-AMP cyclohydrolase from Polaromonas sp. (strain JS666 / ATCC BAA-500).